The primary structure comprises 177 residues: Thaumatin-like protein (177 aa).

A signal peptide spans 1–26 (MASPATSSAVLVVVLVATLAAGGANA).

Belongs to the thaumatin family.

Its subcellular location is the secreted. The sequence is that of Thaumatin-like protein from Oryza sativa subsp. japonica (Rice).